The sequence spans 369 residues: Probable trehalose-phosphate phosphatase D (369 aa).

A disordered region spans residues 63-85; that stretch reads RASSPTRTRPGNISPLPESDEED.

Belongs to the trehalose phosphatase family. Requires a divalent metal cation as cofactor.

The enzyme catalyses alpha,alpha-trehalose 6-phosphate + H2O = alpha,alpha-trehalose + phosphate. It functions in the pathway glycan biosynthesis; trehalose biosynthesis. Removes the phosphate from trehalose 6-phosphate to produce free trehalose. Trehalose accumulation in plant may improve abiotic stress tolerance. The sequence is that of Probable trehalose-phosphate phosphatase D (TPPD) from Arabidopsis thaliana (Mouse-ear cress).